The chain runs to 579 residues: Chromosomal replication initiator protein DnaA (579 aa).

Residues 1 to 71 (MQDFWQAAAA…TALACEYWET (71 aa)) form a domain I, interacts with DnaA modulators region. The segment at 71–242 (TQVSVHFVLD…QQSDTVHERS (172 aa)) is domain II. Disordered regions lie at residues 131–196 (AGAQ…SAAH) and 212–240 (EASA…TVHE). Low complexity predominate over residues 171 to 183 (SQSQQSAQGRGAA). Residues 243 to 459 (RLNPILTFDN…GALRKILAFS (217 aa)) are domain III, AAA+ region. ATP is bound by residues G287, G289, K290, and T291. Residues 460–579 (NFHGKDITID…LHVLEQTLKG (120 aa)) are domain IV, binds dsDNA.

The protein belongs to the DnaA family. Oligomerizes as a right-handed, spiral filament on DNA at oriC.

It localises to the cytoplasm. Functionally, plays an essential role in the initiation and regulation of chromosomal replication. ATP-DnaA binds to the origin of replication (oriC) to initiate formation of the DNA replication initiation complex once per cell cycle. Binds the DnaA box (a 9 base pair repeat at the origin) and separates the double-stranded (ds)DNA. Forms a right-handed helical filament on oriC DNA; dsDNA binds to the exterior of the filament while single-stranded (ss)DNA is stabiized in the filament's interior. The ATP-DnaA-oriC complex binds and stabilizes one strand of the AT-rich DNA unwinding element (DUE), permitting loading of DNA polymerase. After initiation quickly degrades to an ADP-DnaA complex that is not apt for DNA replication. Binds acidic phospholipids. This chain is Chromosomal replication initiator protein DnaA, found in Cupriavidus metallidurans (strain ATCC 43123 / DSM 2839 / NBRC 102507 / CH34) (Ralstonia metallidurans).